The following is a 181-amino-acid chain: MTTIVSVRRDGKVAMGGDGQVSLGNTVMKGNARKVRRLYHNKVIAGFAGGTADAFTLFERFEAQLEKHQGNLVRAAVELAKDWRTDRALRRLEALLAVADNKASLIITGNGDVIEPENSLIAIGSGGPYAQAAARALLENTELEASDIVKKSLVIAGDICVFTNQNLTLEEIDGTQTPSTV.

Residue threonine 2 is part of the active site. The Na(+) site is built by glycine 157, cysteine 160, and threonine 163.

This sequence belongs to the peptidase T1B family. HslV subfamily. A double ring-shaped homohexamer of HslV is capped on each side by a ring-shaped HslU homohexamer. The assembly of the HslU/HslV complex is dependent on binding of ATP.

It is found in the cytoplasm. The catalysed reaction is ATP-dependent cleavage of peptide bonds with broad specificity.. Its activity is regulated as follows. Allosterically activated by HslU binding. Its function is as follows. Protease subunit of a proteasome-like degradation complex believed to be a general protein degrading machinery. The polypeptide is ATP-dependent protease subunit HslV (Hahella chejuensis (strain KCTC 2396)).